We begin with the raw amino-acid sequence, 729 residues long: Polyribonucleotide nucleotidyltransferase (729 aa).

Mg(2+) is bound by residues aspartate 485 and aspartate 491. The KH domain maps to 552–611 (PRITTMKVAEDKIRTIIGKGGATIKGLIESTGVSIDIDDSGVVQLFSPDKMALEEAQKQI). The S1 motif domain occupies 621 to 689 (GQTYQGKVSK…KQGRVKLEWK (69 aa)).

Belongs to the polyribonucleotide nucleotidyltransferase family. In terms of assembly, component of the RNA degradosome, which is a multiprotein complex involved in RNA processing and mRNA degradation. Mg(2+) is required as a cofactor.

It is found in the cytoplasm. It carries out the reaction RNA(n+1) + phosphate = RNA(n) + a ribonucleoside 5'-diphosphate. In terms of biological role, involved in mRNA degradation. Catalyzes the phosphorolysis of single-stranded polyribonucleotides processively in the 3'- to 5'-direction. The polypeptide is Polyribonucleotide nucleotidyltransferase (Legionella pneumophila subsp. pneumophila (strain Philadelphia 1 / ATCC 33152 / DSM 7513)).